The primary structure comprises 373 residues: Mitochondrial fission regulator 2 (373 aa).

Position 136 is a phosphoserine (Ser136). Residues 151–179 adopt a coiled-coil conformation; it reads VSEAAIKKIAALEDELTSLRAQIAAIVAM. Disordered stretches follow at residues 189–331 and 346–373; these read GFIS…WDPV and DDSFDSENRSWQGSPFSSPETSRNGSRF. The span at 224 to 239 shows a compositional bias: pro residues; the sequence is SPPPLPPPPPPLPPPQ. Composition is skewed to basic and acidic residues over residues 275–287 and 297–310; these read KKTDGSHHSESQR and VLKDMNKVKLRPVE. Phosphoserine occurs at positions 312 and 348. The segment covering 354–373 has biased composition (polar residues); that stretch reads RSWQGSPFSSPETSRNGSRF.

The protein belongs to the MTFR1 family.

It is found in the mitochondrion. May play a role in mitochondrial aerobic respiration essentially in the testis. Can also promote mitochondrial fission. The polypeptide is Mitochondrial fission regulator 2 (Mtfr2) (Rattus norvegicus (Rat)).